The chain runs to 227 residues: Cytochrome c oxidase subunit 2 (227 aa).

The Mitochondrial intermembrane segment spans residues Met-1–Ser-14. Residues Pro-15–Met-45 traverse the membrane as a helical segment. The Mitochondrial matrix segment spans residues Leu-46 to Gln-59. Residues Glu-60–Met-87 traverse the membrane as a helical segment. The Mitochondrial intermembrane segment spans residues Asp-88 to Gln-227. Cu cation-binding residues include His-161, Cys-196, Glu-198, Cys-200, His-204, and Met-207. Glu-198 contacts Mg(2+). Tyr-218 carries the post-translational modification Phosphotyrosine.

This sequence belongs to the cytochrome c oxidase subunit 2 family. In terms of assembly, component of the cytochrome c oxidase (complex IV, CIV), a multisubunit enzyme composed of 14 subunits. The complex is composed of a catalytic core of 3 subunits MT-CO1, MT-CO2 and MT-CO3, encoded in the mitochondrial DNA, and 11 supernumerary subunits COX4I, COX5A, COX5B, COX6A, COX6B, COX6C, COX7A, COX7B, COX7C, COX8 and NDUFA4, which are encoded in the nuclear genome. The complex exists as a monomer or a dimer and forms supercomplexes (SCs) in the inner mitochondrial membrane with NADH-ubiquinone oxidoreductase (complex I, CI) and ubiquinol-cytochrome c oxidoreductase (cytochrome b-c1 complex, complex III, CIII), resulting in different assemblies (supercomplex SCI(1)III(2)IV(1) and megacomplex MCI(2)III(2)IV(2)). Found in a complex with TMEM177, COA6, COX18, COX20, SCO1 and SCO2. Interacts with TMEM177 in a COX20-dependent manner. Interacts with COX20. Interacts with COX16. Cu cation is required as a cofactor.

It is found in the mitochondrion inner membrane. The enzyme catalyses 4 Fe(II)-[cytochrome c] + O2 + 8 H(+)(in) = 4 Fe(III)-[cytochrome c] + 2 H2O + 4 H(+)(out). Functionally, component of the cytochrome c oxidase, the last enzyme in the mitochondrial electron transport chain which drives oxidative phosphorylation. The respiratory chain contains 3 multisubunit complexes succinate dehydrogenase (complex II, CII), ubiquinol-cytochrome c oxidoreductase (cytochrome b-c1 complex, complex III, CIII) and cytochrome c oxidase (complex IV, CIV), that cooperate to transfer electrons derived from NADH and succinate to molecular oxygen, creating an electrochemical gradient over the inner membrane that drives transmembrane transport and the ATP synthase. Cytochrome c oxidase is the component of the respiratory chain that catalyzes the reduction of oxygen to water. Electrons originating from reduced cytochrome c in the intermembrane space (IMS) are transferred via the dinuclear copper A center (CU(A)) of subunit 2 and heme A of subunit 1 to the active site in subunit 1, a binuclear center (BNC) formed by heme A3 and copper B (CU(B)). The BNC reduces molecular oxygen to 2 water molecules using 4 electrons from cytochrome c in the IMS and 4 protons from the mitochondrial matrix. The sequence is that of Cytochrome c oxidase subunit 2 (MT-CO2) from Osphranter robustus (Wallaroo).